Here is a 263-residue protein sequence, read N- to C-terminus: Shikimate dehydrogenase (NADP(+)) (263 aa).

Residues 16–18 (SKS) and Thr65 each bind shikimate. Catalysis depends on Lys69, which acts as the Proton acceptor. 2 residues coordinate shikimate: Asn90 and Asp105. NADP(+)-binding positions include 125–129 (GAGGS), Ser181, and Leu208. Tyr210 contacts shikimate. Gly230 lines the NADP(+) pocket. A shikimate-binding site is contributed by Gln237.

The protein belongs to the shikimate dehydrogenase family. Homodimer.

The catalysed reaction is shikimate + NADP(+) = 3-dehydroshikimate + NADPH + H(+). The protein operates within metabolic intermediate biosynthesis; chorismate biosynthesis; chorismate from D-erythrose 4-phosphate and phosphoenolpyruvate: step 4/7. Its function is as follows. Involved in the biosynthesis of the chorismate, which leads to the biosynthesis of aromatic amino acids. Catalyzes the reversible NADPH linked reduction of 3-dehydroshikimate (DHSA) to yield shikimate (SA). The chain is Shikimate dehydrogenase (NADP(+)) from Helicobacter pylori (strain ATCC 700392 / 26695) (Campylobacter pylori).